We begin with the raw amino-acid sequence, 169 residues long: MPPTRDPFQQPTLDNDDSYLGELRASKKLPYKNPTHLAQQQEPWSRLNSTPTITSMRRDAYYFDPEIPKDDLDFRLAALYNHHTGTFKNKSEILLNQKTTQDTYRTKIQFPGEFLTPPTPPITFLANIRHWINPKKESIHSIQGSIVSPHTAATNGGYSRKKDGGFFST.

Disordered stretches follow at residues 26–45 (SKKLPYKNPTHLAQQQEPWS) and 150–169 (HTAATNGGYSRKKDGGFFST). Positions 36–45 (HLAQQQEPWS) are enriched in polar residues. Residues 160–169 (RKKDGGFFST) are compositionally biased toward basic and acidic residues.

As to quaternary structure, microtubule inner protein component of sperm flagellar doublet microtubules. In terms of tissue distribution, expressed in cerebrum, cerebellum, gastrocnemius muscle, spinal cord and lung tissues.

The protein localises to the cytoplasm. It is found in the cytoskeleton. It localises to the flagellum axoneme. Its subcellular location is the cilium axoneme. Functionally, microtubule inner protein (MIP) part of the dynein-decorated doublet microtubules (DMTs) in cilia axoneme, which is required for motile cilia beating. May play an important role for the maintenance of myelin-axon integrity. May affect intracellular Ca(2+) homeostasis. This Homo sapiens (Human) protein is Cilia- and flagella-associated protein 276.